The chain runs to 77 residues: Dermatoxin-S1 (77 aa).

The signal sequence occupies residues 1–22; sequence MAFLKKSLFLILFLGLVPLSFC. Positions 23–44 are excised as a propeptide; it reads ENDKREGENEEEQDDDQSEEKR. Glutamine amide is present on Gln76.

As to expression, expressed by the skin glands.

Its subcellular location is the secreted. It localises to the target cell membrane. Functionally, antimicrobial peptide with potent activity against Gram-positive bacteria B.megaterium, C.glutamicum and S.aureus and mollicutes A.laidlawii and S.melliferum. Less active against Gram-negative bacteria B.cepacia, P.aeruginosa, S.typhimurium and S.meliloti. Probably acts by disturbing membrane functions with its amphipathic structure. The sequence is that of Dermatoxin-S1 from Phyllomedusa sauvagei (Sauvage's leaf frog).